We begin with the raw amino-acid sequence, 141 residues long: Large ribosomal subunit protein uL11 (141 aa).

This sequence belongs to the universal ribosomal protein uL11 family. In terms of assembly, part of the ribosomal stalk of the 50S ribosomal subunit. Interacts with L10 and the large rRNA to form the base of the stalk. L10 forms an elongated spine to which L12 dimers bind in a sequential fashion forming a multimeric L10(L12)X complex. Post-translationally, one or more lysine residues are methylated.

Functionally, forms part of the ribosomal stalk which helps the ribosome interact with GTP-bound translation factors. The protein is Large ribosomal subunit protein uL11 of Chlorobium phaeovibrioides (strain DSM 265 / 1930) (Prosthecochloris vibrioformis (strain DSM 265)).